We begin with the raw amino-acid sequence, 257 residues long: Dihydroorotate dehydrogenase B (NAD(+)), electron transfer subunit (257 aa).

One can recognise an FAD-binding FR-type domain in the interval 2–102 (IGRERMTVAS…LGPLGNGFPL (101 aa)). FAD-binding positions include 53–56 (RPLS), 70–72 (IYR), and 77–78 (GT). [2Fe-2S] cluster-binding residues include C221, C226, C229, and C244.

The protein belongs to the PyrK family. In terms of assembly, heterotetramer of 2 PyrK and 2 PyrD type B subunits. It depends on [2Fe-2S] cluster as a cofactor. FAD is required as a cofactor.

It functions in the pathway pyrimidine metabolism; UMP biosynthesis via de novo pathway; orotate from (S)-dihydroorotate (NAD(+) route): step 1/1. In terms of biological role, responsible for channeling the electrons from the oxidation of dihydroorotate from the FMN redox center in the PyrD type B subunit to the ultimate electron acceptor NAD(+). In Geobacillus kaustophilus (strain HTA426), this protein is Dihydroorotate dehydrogenase B (NAD(+)), electron transfer subunit.